The following is a 719-amino-acid chain: Eukaryotic translation initiation factor 3 subunit B (719 aa).

Residues asparagine 60 to aspartate 147 enclose the RRM domain. WD repeat units lie at residues valine 167–leucine 207, leucine 511–serine 553, and glutamate 555–isoleucine 598. Residues glutamate 675 to glutamate 686 are compositionally biased toward basic and acidic residues. The tract at residues glutamate 675–glutamate 698 is disordered. Residues alanine 687–glutamate 698 are compositionally biased toward acidic residues.

It belongs to the eIF-3 subunit B family. As to quaternary structure, component of the eukaryotic translation initiation factor 3 (eIF-3) complex.

It localises to the cytoplasm. Its function is as follows. RNA-binding component of the eukaryotic translation initiation factor 3 (eIF-3) complex, which is involved in protein synthesis of a specialized repertoire of mRNAs and, together with other initiation factors, stimulates binding of mRNA and methionyl-tRNAi to the 40S ribosome. The eIF-3 complex specifically targets and initiates translation of a subset of mRNAs involved in cell proliferation. This Nicotiana tabacum (Common tobacco) protein is Eukaryotic translation initiation factor 3 subunit B (TIF3B1).